The primary structure comprises 425 residues: 3-isopropylmalate dehydratase large subunit (425 aa).

[4Fe-4S] cluster-binding residues include C305, C365, and C368.

The protein belongs to the aconitase/IPM isomerase family. LeuC type 2 subfamily. Heterodimer of LeuC and LeuD. Requires [4Fe-4S] cluster as cofactor.

The enzyme catalyses (2R,3S)-3-isopropylmalate = (2S)-2-isopropylmalate. Its pathway is amino-acid biosynthesis; L-leucine biosynthesis; L-leucine from 3-methyl-2-oxobutanoate: step 2/4. In terms of biological role, catalyzes the isomerization between 2-isopropylmalate and 3-isopropylmalate, via the formation of 2-isopropylmaleate. The chain is 3-isopropylmalate dehydratase large subunit from Clostridioides difficile (strain 630) (Peptoclostridium difficile).